The primary structure comprises 97 residues: Putative ankyrin repeat protein RBE_0357 (97 aa).

Residues 24–54 (YGKTALHYAYTKRNIDIIKILLKCPGIKICI) form an ANK repeat.

In Rickettsia bellii (strain RML369-C), this protein is Putative ankyrin repeat protein RBE_0357.